The following is a 688-amino-acid chain: Pentatricopeptide repeat-containing protein At3g18020 (688 aa).

PPR repeat units lie at residues Asp-53 to Pro-88, Asp-89 to Pro-123, Asp-124 to Phe-158, Ser-161 to Pro-195, Asp-196 to Pro-230, Asn-231 to Tyr-261, Lys-271 to Asn-305, Val-306 to Pro-340, Arg-341 to Pro-375, Ser-376 to Lys-406, Arg-411 to Pro-445, Asp-446 to Ala-480, Asp-482 to Pro-517, Gly-518 to Ala-552, Asp-553 to Pro-583, Asp-588 to Pro-622, and Asn-623 to Pro-657.

Belongs to the PPR family. P subfamily.

The protein is Pentatricopeptide repeat-containing protein At3g18020 of Arabidopsis thaliana (Mouse-ear cress).